We begin with the raw amino-acid sequence, 479 residues long: Ammonium transporter Rh type C (479 aa).

The Cytoplasmic segment spans residues 1–9 (MAWNTNLRW). Residues 10-30 (RLPLTCLLLQVAMVILFGVFV) traverse the membrane as a helical segment. Residues 31–60 (RYDFDADAHWWTERKHKNLSEVENEFYYRY) lie on the Extracellular side of the membrane. The N-linked (GlcNAc...) asparagine glycan is linked to N48. The chain crosses the membrane as a helical span at residues 61 to 81 (PSFQDVHVMVFVGFGFLMTFL). The Cytoplasmic portion of the chain corresponds to 82–85 (QRYG). The helical transmembrane segment at 86 to 106 (FSAVGFNFLLAAFGIQWALLM) threads the bilayer. At 107–123 (QGWFHFLEGRYIVVGVE) the chain is on the extracellular side. The chain crosses the membrane as a helical span at residues 124 to 144 (NLINADFCVASVCVAFGAVLG). Topologically, residues 145 to 148 (KVSP) are cytoplasmic. A helical membrane pass occupies residues 149-169 (IQLLIMTFFQVTLFAVNEFIL). Residues 170–177 (LNLLKVKD) are Extracellular-facing. The helical transmembrane segment at 178 to 200 (AGGSMTIHTFYAYFELTVTRILY) threads the bilayer. Residues 201 to 218 (RRNLEQSKERQSSAYQSD) lie on the Cytoplasmic side of the membrane. The chain crosses the membrane as a helical span at residues 219-239 (LFAMIGTLFLWMYWPSFNSAI). Residues 240–250 (SYHGDSQHRAA) are Extracellular-facing. A helical membrane pass occupies residues 251 to 271 (INTYCSLAACVLTSVAVSSAL). Residues 272-281 (HKKGKLDMVH) lie on the Cytoplasmic side of the membrane. Residues 282–302 (IQNATLAGGVAVGTTAEMMLM) traverse the membrane as a helical segment. P303 is a topological domain (extracellular). A helical membrane pass occupies residues 304 to 324 (YGALIIGFICGIISTLGFVYL). At 325–345 (TPFLESRLHIQDTCGINNLHG) the chain is on the cytoplasmic side. Residues 346–366 (IPGIIGGIVGAVTAASASLEV) form a helical membrane-spanning segment. Residues 367-394 (YGKEGLVHSFDFQDFKRDWTARTQGKFQ) lie on the Extracellular side of the membrane. Residues 395–415 (IYGLLVTLAMALMGGIIVGLI) traverse the membrane as a helical segment. The Cytoplasmic portion of the chain corresponds to 416 to 479 (LRLPFWGQPS…PMASSVPLVP (64 aa)).

Belongs to the ammonium transporter (TC 2.A.49) family. Rh subfamily. As to quaternary structure, homotrimer. N-glycosylated.

It is found in the apical cell membrane. The enzyme catalyses NH4(+)(in) = NH4(+)(out). It catalyses the reaction methylamine(out) = methylamine(in). It carries out the reaction CO2(out) = CO2(in). Functionally, ammonium transporter involved in the maintenance of acid-base homeostasis. Transports ammonium and its related derivative methylammonium across the plasma membrane of epithelial cells likely contributing to renal transepithelial ammonia transport and ammonia metabolism. Postulated to primarily mediate an electroneutral bidirectional transport of NH3 ammonia species according to a mechanism that implies interaction of an NH4(+) ion with acidic residues of the pore entry followed by dissociation of NH4(+) into NH3 and H(+). As a result NH3 transits through the central pore and is protonated on the extracellular side reforming NH4(+). May act as a CO2 channel providing for renal acid secretion. The polypeptide is Ammonium transporter Rh type C (RHCG) (Macaca mulatta (Rhesus macaque)).